Here is a 402-residue protein sequence, read N- to C-terminus: Putative F-box protein At1g70970 (402 aa).

The 49-residue stretch at Ser4–Arg52 folds into the F-box domain.

This is Putative F-box protein At1g70970 from Arabidopsis thaliana (Mouse-ear cress).